A 121-amino-acid polypeptide reads, in one-letter code: uncharacterized protein (121 aa).

77 to 84 (AALSFGKT) serves as a coordination point for ATP.

This is an uncharacterized protein from Saccharomyces cerevisiae (strain ATCC 204508 / S288c) (Baker's yeast).